A 499-amino-acid polypeptide reads, in one-letter code: uncharacterized protein (499 aa).

The RING-type; degenerate zinc finger occupies 10-57 (CGICGQEYSEDEKLLIPRILTECGHTICTGCAGKIKGQSSIIACPFDR). The B box-type; degenerate zinc finger occupies 101-147 (NKNGVCDENTNHHASNYCETCDADLCEECWTWIHSISTLAHHEKKMI).

This is an uncharacterized protein from Caenorhabditis elegans.